Here is a 402-residue protein sequence, read N- to C-terminus: Cysteine-rich venom protein (402 aa).

A signal peptide spans 1 to 13; it reads MNLALFIIFATIF. One can recognise an SCP domain in the interval 57–199; the sequence is LETHNQLRNK…VKKVLYTCNY (143 aa).

The protein belongs to the CRISP family. In terms of processing, contains 7 disulfide bonds. Expressed by the venom gland.

The protein localises to the secreted. The sequence is that of Cysteine-rich venom protein from Tityus serrulatus (Brazilian scorpion).